We begin with the raw amino-acid sequence, 1360 residues long: Transmembrane protein 94 (1360 aa).

The Cytoplasmic segment spans residues 1-64 (MDLREKHLGE…FLHLSNRCSC (64 aa)). A helical membrane pass occupies residues 65 to 85 (FHWPGASLMLLAVLLLLCCCG). Residues 86 to 92 (GQPAGSQ) are Lumenal-facing. The chain crosses the membrane as a helical span at residues 93–113 (GVELVNASALFLLLLLNLVLI). Residues 114 to 273 (GRQDRLKRRE…RPVTALDNER (160 aa)) are Cytoplasmic-facing. Residues Ser221 and Ser225 each carry the phosphoserine modification. A helical membrane pass occupies residues 274 to 294 (FTVQSVMLHYAVPVVLAGFLI). The Lumenal segment spans residues 295–320 (TNALRFMFKAPGVTSWQYTLLQLQVN). Residues 321–341 (GMLPILPLLFPVLWVLATACG) form a helical membrane-spanning segment. At 342–1096 (EARVLAQMSK…RHATYGIRKC (755 aa)) the chain is on the cytoplasmic side. A DKQGIL motif is present at residues 417–422 (DKQGIL). Ser444, Ser445, and Ser454 each carry phosphoserine. The interval 487 to 545 (EQERSDWLADGPKPSEPYPHHKGHGRSKHPSGSNVSFSRDTEGGEEEPSKAQPGTEGDP) is disordered. Residues 506–515 (HHKGHGRSKH) show a composition bias toward basic residues. A phosphoserine mark is found at Ser517, Ser522, Ser802, and Ser945. Residues 1097–1117 (FLFLLQCQLTLVVIQFLSCLV) form a helical membrane-spanning segment. Residues 1118-1124 (QLPPLLS) lie on the Lumenal side of the membrane. A helical membrane pass occupies residues 1125–1145 (TTDILWLSCFCYPLLSISLLG). Over 1146–1171 (KPPHSSIMSMATGKNLQSIPKKTQHY) the chain is Cytoplasmic. A helical membrane pass occupies residues 1172 to 1192 (FLLCFLLKFSLTISSCLVCFG). Residues 1193-1232 (FTLQSFCDSARARNLTNCSSVMLCSNDDRAPAWFEDFANG) lie on the Lumenal side of the membrane. N-linked (GlcNAc...) asparagine glycans are attached at residues Asn1206 and Asn1209. A helical membrane pass occupies residues 1233 to 1253 (LLSAQKLTAALIVLHTVFISI). Over 1254 to 1269 (THVHRTKPLWRKSPLT) the chain is Cytoplasmic. The chain crosses the membrane as a helical span at residues 1270–1290 (NLWWAVTVPVVLLGQVVQTVV). Residues 1291 to 1310 (DLQLWTHRDSRVHFGLEDVP) lie on the Lumenal side of the membrane. The chain crosses the membrane as a helical span at residues 1311–1331 (LLTWLLGCLSLVLVVVTNEIV). At 1332–1360 (KLHEIRVRVRYQKRQKLQFETKLGMNSPF) the chain is on the cytoplasmic side. Positions 1355–1357 (GMN) match the GMN; metal-binding motif motif.

Forms homooligomers.

Its subcellular location is the endoplasmic reticulum membrane. In terms of biological role, could function in the uptake of Mg(2+) from the cytosol into the endoplasmic reticulum and regulate intracellular Mg(2+) homeostasis. The sequence is that of Transmembrane protein 94 from Mus musculus (Mouse).